A 513-amino-acid polypeptide reads, in one-letter code: ATP synthase subunit alpha (513 aa).

169–176 lines the ATP pocket; it reads GDRQIGKT.

Belongs to the ATPase alpha/beta chains family. F-type ATPases have 2 components, CF(1) - the catalytic core - and CF(0) - the membrane proton channel. CF(1) has five subunits: alpha(3), beta(3), gamma(1), delta(1), epsilon(1). CF(0) has three main subunits: a(1), b(2) and c(9-12). The alpha and beta chains form an alternating ring which encloses part of the gamma chain. CF(1) is attached to CF(0) by a central stalk formed by the gamma and epsilon chains, while a peripheral stalk is formed by the delta and b chains.

The protein resides in the cell inner membrane. It catalyses the reaction ATP + H2O + 4 H(+)(in) = ADP + phosphate + 5 H(+)(out). Its function is as follows. Produces ATP from ADP in the presence of a proton gradient across the membrane. The alpha chain is a regulatory subunit. The chain is ATP synthase subunit alpha from Francisella philomiragia subsp. philomiragia (strain ATCC 25017 / CCUG 19701 / FSC 153 / O#319-036).